Consider the following 327-residue polypeptide: Ribose-phosphate pyrophosphokinase (327 aa).

An ATP-binding site is contributed by 51–53 (DGE). 2 residues coordinate Mg(2+): His-144 and Asp-183. Lys-207 is a catalytic residue. D-ribose 5-phosphate is bound by residues Arg-209, Asp-233, and 237–241 (DTGGT).

The protein belongs to the ribose-phosphate pyrophosphokinase family. Class I subfamily. As to quaternary structure, homohexamer. Mg(2+) is required as a cofactor.

It is found in the cytoplasm. The enzyme catalyses D-ribose 5-phosphate + ATP = 5-phospho-alpha-D-ribose 1-diphosphate + AMP + H(+). The protein operates within metabolic intermediate biosynthesis; 5-phospho-alpha-D-ribose 1-diphosphate biosynthesis; 5-phospho-alpha-D-ribose 1-diphosphate from D-ribose 5-phosphate (route I): step 1/1. Functionally, involved in the biosynthesis of the central metabolite phospho-alpha-D-ribosyl-1-pyrophosphate (PRPP) via the transfer of pyrophosphoryl group from ATP to 1-hydroxyl of ribose-5-phosphate (Rib-5-P). The polypeptide is Ribose-phosphate pyrophosphokinase (Prochlorococcus marinus (strain SARG / CCMP1375 / SS120)).